The sequence spans 165 residues: Nucleoside-triphosphatase THEP1 (165 aa).

Residues 7 to 14 (GRPGVGKT) and 93 to 100 (LVIIDEVG) contribute to the ATP site.

This sequence belongs to the THEP1 NTPase family.

It carries out the reaction a ribonucleoside 5'-triphosphate + H2O = a ribonucleoside 5'-diphosphate + phosphate + H(+). Functionally, has nucleotide phosphatase activity towards ATP, GTP, CTP, TTP and UTP. May hydrolyze nucleoside diphosphates with lower efficiency. This Archaeoglobus fulgidus (strain ATCC 49558 / DSM 4304 / JCM 9628 / NBRC 100126 / VC-16) protein is Nucleoside-triphosphatase THEP1.